A 252-amino-acid chain; its full sequence is MDKFAKRIIPCLDVNNGRVVKGINFVGLRDAGDPVEVAKRYNDEGADELCFLDITASSDGRDTIVHVVEEVARQLFIPLTVGGGIRKIDDISRLLNVGCDKVSLNSAAIHNPNLISEAANKFGSQCVVVAIDVKKVDGSYHVFINGGRVDTKIDAYEWAKKVYELGAGEILLTSMDSDGTKNGYDLEVTSKISNLVGIPVIASGGAGTMEHILEAFKFGADAALAASIFHYKEIEISELKKYLLANDIGVRI.

Catalysis depends on residues D13 and D132.

The protein belongs to the HisA/HisF family. As to quaternary structure, heterodimer of HisH and HisF.

It is found in the cytoplasm. The enzyme catalyses 5-[(5-phospho-1-deoxy-D-ribulos-1-ylimino)methylamino]-1-(5-phospho-beta-D-ribosyl)imidazole-4-carboxamide + L-glutamine = D-erythro-1-(imidazol-4-yl)glycerol 3-phosphate + 5-amino-1-(5-phospho-beta-D-ribosyl)imidazole-4-carboxamide + L-glutamate + H(+). Its pathway is amino-acid biosynthesis; L-histidine biosynthesis; L-histidine from 5-phospho-alpha-D-ribose 1-diphosphate: step 5/9. In terms of biological role, IGPS catalyzes the conversion of PRFAR and glutamine to IGP, AICAR and glutamate. The HisF subunit catalyzes the cyclization activity that produces IGP and AICAR from PRFAR using the ammonia provided by the HisH subunit. The chain is Imidazole glycerol phosphate synthase subunit HisF from Campylobacter fetus subsp. fetus (strain 82-40).